We begin with the raw amino-acid sequence, 333 residues long: Homeobox protein HMX1 (333 aa).

3 disordered regions span residues M1–A74, G86–C109, and C139–T204. Positions D17–A30 are enriched in polar residues. The segment covering T87–G105 has biased composition (gly residues). The segment covering T144 to R158 has biased composition (basic and acidic residues). Over residues A159–S176 the composition is skewed to gly residues. The span at E181–E192 shows a compositional bias: acidic residues. Positions K201–L260 form a DNA-binding region, homeobox. Residues A261–H271 carry the HMX family specific domain 1 motif.

It belongs to the HMX homeobox family.

The protein localises to the nucleus. Its function is as follows. DNA-binding protein that binds to the 5'-CAAG-3' core sequence. May function as a transcriptional repressor. Seems to act as a transcriptional antagonist of NKX2-5. May play an important role in the development of craniofacial structures such as the eye and ear. The chain is Homeobox protein HMX1 (HMX1) from Gallus gallus (Chicken).